The primary structure comprises 101 residues: Small ribosomal subunit protein uS14 (101 aa).

This sequence belongs to the universal ribosomal protein uS14 family. As to quaternary structure, part of the 30S ribosomal subunit. Contacts proteins S3 and S10.

Binds 16S rRNA, required for the assembly of 30S particles and may also be responsible for determining the conformation of the 16S rRNA at the A site. In Shewanella amazonensis (strain ATCC BAA-1098 / SB2B), this protein is Small ribosomal subunit protein uS14.